A 506-amino-acid chain; its full sequence is DEAD-box ATP-dependent RNA helicase CshA (506 aa).

Residues 2–30 (QNFKELGISDNTVQSLESMGFKEPTPIQK) carry the Q motif motif. The region spanning 33–203 (IPYALQGIDI…QQFMKSPKII (171 aa)) is the Helicase ATP-binding domain. An ATP-binding site is contributed by 46–53 (AQTGTGKT). A DEAD box motif is present at residues 150 to 153 (DEAD). One can recognise a Helicase C-terminal domain in the interval 214-375 (QIEEFYTIVK…LRPPHRKEVL (162 aa)). The disordered stretch occupies residues 436 to 506 (EKPLSRKGRN…KGRTFADHQK (71 aa)). Residues 468 to 480 (KRSKGYSSKKKST) are compositionally biased toward basic residues.

The protein belongs to the DEAD box helicase family. CshA subfamily. In terms of assembly, oligomerizes, may be a member of the RNA degradosome.

It is found in the cytoplasm. It carries out the reaction ATP + H2O = ADP + phosphate + H(+). Its function is as follows. DEAD-box RNA helicase possibly involved in RNA degradation. Unwinds dsRNA in both 5'- and 3'-directions, has RNA-dependent ATPase activity. The chain is DEAD-box ATP-dependent RNA helicase CshA from Staphylococcus aureus (strain MW2).